Here is a 185-residue protein sequence, read N- to C-terminus: Ribosome-recycling factor (185 aa).

The protein belongs to the RRF family.

The protein localises to the cytoplasm. Functionally, responsible for the release of ribosomes from messenger RNA at the termination of protein biosynthesis. May increase the efficiency of translation by recycling ribosomes from one round of translation to another. In Frankia casuarinae (strain DSM 45818 / CECT 9043 / HFP020203 / CcI3), this protein is Ribosome-recycling factor.